Reading from the N-terminus, the 71-residue chain is SRY-related protein LG27 (71 aa).

Positions 1-68 (VKRPMNAFMV…KHMADYPNYK (68 aa)) form a DNA-binding region, HMG box.

It localises to the nucleus. This Eublepharis macularius (Leopard gecko) protein is SRY-related protein LG27.